The primary structure comprises 78 residues: Large ribosomal subunit protein uL29 (78 aa).

Belongs to the universal ribosomal protein uL29 family.

This chain is Large ribosomal subunit protein uL29, found in Salinispora arenicola (strain CNS-205).